The primary structure comprises 362 residues: Oryzain gamma chain (362 aa).

Positions 1–24 are cleaved as a signal peptide; the sequence is MAHRRIILLLAAAAVAATSAVAAA. Residues 25–144 constitute a propeptide, activation peptide; sequence SSGFDDSNPI…GNHRMRDAAA (120 aa). The N-linked (GlcNAc...) asparagine glycan is linked to asparagine 128. 2 cysteine pairs are disulfide-bonded: cysteine 166–cysteine 209 and cysteine 200–cysteine 242. Residue cysteine 169 is part of the active site. An N-linked (GlcNAc...) asparagine glycan is attached at asparagine 258. Cysteine 300 and cysteine 350 are oxidised to a cystine. Residues histidine 309 and asparagine 329 contribute to the active site.

The protein belongs to the peptidase C1 family. Expressed only in seeds.

The sequence is that of Oryzain gamma chain from Oryza sativa subsp. japonica (Rice).